Reading from the N-terminus, the 177-residue chain is Small ribosomal subunit protein eS10z (177 aa).

Positions 90–177 are disordered; the sequence is TLKKSAKPGG…AAAPSGSGFP (88 aa). A compositionally biased stretch (basic and acidic residues) spans 108-140; it reads DRQRGPPRSDGDRPRFGDRDGYRGGPRGGDEKG. The segment covering 141 to 150 has biased composition (low complexity); sequence GAPADFQPSF. The segment covering 151-165 has biased composition (gly residues); the sequence is QGGGGRPGFGRGAGG. Low complexity predominate over residues 166-177; that stretch reads YSAAAPSGSGFP.

The protein belongs to the eukaryotic ribosomal protein eS10 family.

The protein resides in the cytoplasm. The polypeptide is Small ribosomal subunit protein eS10z (RPS10A) (Arabidopsis thaliana (Mouse-ear cress)).